A 347-amino-acid chain; its full sequence is Membrane progestin receptor gamma-B (347 aa).

The Cytoplasmic segment spans residues 1–52; that stretch reads MLSLIKLQRVFNVHQVPKAFHEDGIISGYRHPRSSATECVWSLFQLTNETLN. The chain crosses the membrane as a helical span at residues 53 to 73; it reads VWTHFLPTWYFLWKLMTVLLM. Over 74–81 the chain is Extracellular; the sequence is EDVWNEAY. Residues 82 to 102 form a helical membrane-spanning segment; sequence TWPLLVFLFSCCVYPLASSCA. Residues 103-114 lie on the Cytoplasmic side of the membrane; sequence HTFSSMSTRARH. A helical membrane pass occupies residues 115–135; that stretch reads ICYFFDYGALSFYSLGSAISY. Topologically, residues 136-138 are extracellular; that stretch reads SAY. Residues 139–159 traverse the membrane as a helical segment; it reads VFPDAWLSSSFHAYYISVAVF. Topologically, residues 160 to 201 are cytoplasmic; that stretch reads NTVLSTSLACYSRLGLPLLHYSHDIVERFSERQCPRMSKVLR. Residues 202–222 form a helical membrane-spanning segment; that stretch reads ILAFAYPYLFDNIPLFYRLFV. The Extracellular segment spans residues 223–235; the sequence is CVGEGCTDNEANS. Residues 236-256 traverse the membrane as a helical segment; sequence VHVQHTLLAFLTSFLFATHLP. Residues 257–314 lie on the Cytoplasmic side of the membrane; sequence ERLAPGRFDYIGHSHQLFHVCAIIGTHFQMKAIEMDMGLRRSQLLASAPAISFNNTIG. A helical membrane pass occupies residues 315-335; sequence AALLCVSVSLGIICVYSLPLL. Over 336–347 the chain is Extracellular; that stretch reads YSSNPKNTANKE.

It belongs to the ADIPOR family.

It is found in the membrane. Functionally, steroid membrane receptor. Binds progesterone. May be involved in oocyte maturation. The protein is Membrane progestin receptor gamma-B of Danio rerio (Zebrafish).